We begin with the raw amino-acid sequence, 317 residues long: Transaldolase (317 aa).

The active-site Schiff-base intermediate with substrate is lysine 132.

The protein belongs to the transaldolase family. Type 1 subfamily. As to quaternary structure, homodimer.

The protein localises to the cytoplasm. The catalysed reaction is D-sedoheptulose 7-phosphate + D-glyceraldehyde 3-phosphate = D-erythrose 4-phosphate + beta-D-fructose 6-phosphate. It functions in the pathway carbohydrate degradation; pentose phosphate pathway; D-glyceraldehyde 3-phosphate and beta-D-fructose 6-phosphate from D-ribose 5-phosphate and D-xylulose 5-phosphate (non-oxidative stage): step 2/3. Functionally, transaldolase is important for the balance of metabolites in the pentose-phosphate pathway. This is Transaldolase from Histophilus somni (strain 2336) (Haemophilus somnus).